A 120-amino-acid polypeptide reads, in one-letter code: Large ribosomal subunit protein bL12 (120 aa).

This sequence belongs to the bacterial ribosomal protein bL12 family. As to quaternary structure, homodimer. Part of the ribosomal stalk of the 50S ribosomal subunit. Forms a multimeric L10(L12)X complex, where L10 forms an elongated spine to which 2 to 4 L12 dimers bind in a sequential fashion. Binds GTP-bound translation factors.

Functionally, forms part of the ribosomal stalk which helps the ribosome interact with GTP-bound translation factors. Is thus essential for accurate translation. This is Large ribosomal subunit protein bL12 from Shouchella clausii (strain KSM-K16) (Alkalihalobacillus clausii).